The sequence spans 247 residues: 2,3-bisphosphoglycerate-dependent phosphoglycerate mutase (247 aa).

Residues 13 to 20, 26 to 27, arginine 65, 92 to 95, lysine 103, 119 to 120, and 186 to 187 each bind substrate; these read RHGESDWN, TG, ERHY, RR, and GN. Histidine 14 serves as the catalytic Tele-phosphohistidine intermediate. The active-site Proton donor/acceptor is the glutamate 92.

The protein belongs to the phosphoglycerate mutase family. BPG-dependent PGAM subfamily. As to quaternary structure, homotetramer, dimer of dimers.

It carries out the reaction (2R)-2-phosphoglycerate = (2R)-3-phosphoglycerate. It participates in carbohydrate degradation; glycolysis; pyruvate from D-glyceraldehyde 3-phosphate: step 3/5. In terms of biological role, catalyzes the interconversion of 2-phosphoglycerate and 3-phosphoglycerate. This is 2,3-bisphosphoglycerate-dependent phosphoglycerate mutase from Mycobacterium leprae (strain Br4923).